The sequence spans 381 residues: Probable 26S proteasome regulatory subunit rpn9 (381 aa).

Residues Q177–S343 enclose the PCI domain.

This sequence belongs to the proteasome subunit S11 family.

Its function is as follows. Acts as a regulatory subunit of the 26S proteasome which is involved in the ATP-dependent degradation of ubiquitinated proteins. This chain is Probable 26S proteasome regulatory subunit rpn9 (rpn9), found in Schizosaccharomyces pombe (strain 972 / ATCC 24843) (Fission yeast).